The sequence spans 782 residues: Ribosome biogenesis protein ERB1 (782 aa).

A compositionally biased stretch (basic residues) spans 1–11; sequence MSVNSRKRKVA. The tract at residues 1-120 is disordered; sequence MSVNSRKRKV…LEGEEDESLK (120 aa). Composition is skewed to acidic residues over residues 39-51 and 59-75; these read DESE…EDTD and LSDE…DEAE. A compositionally biased stretch (polar residues) spans 82-92; it reads RNLNTSGGSQQ. A compositionally biased stretch (acidic residues) spans 106 to 117; the sequence is GADGELEGEEDE. WD repeat units follow at residues 432–471 and 475–516; these read GQEG…QVWN and SDEE…PDVE. The interval 533–556 is disordered; sequence KPSTAANGEAPKQSPGKWSRPGSR. WD repeat units lie at residues 612–652, 653–692, 696–736, and 752–782; these read RLKG…KILQ, PGAK…KPYK, FHKE…DLME, and KSRL…RLWN.

This sequence belongs to the WD repeat BOP1/ERB1 family. As to quaternary structure, component of the NOP7 complex, composed of ERB1, NOP7 and YTM1. The complex is held together by ERB1, which interacts with NOP7 via its N-terminal domain and with YTM1 via a high-affinity interaction between the seven-bladed beta-propeller domains of the 2 proteins. The NOP7 complex associates with the 66S pre-ribosome.

Its subcellular location is the nucleus. The protein localises to the nucleolus. It is found in the nucleoplasm. Component of the NOP7 complex, which is required for maturation of the 25S and 5.8S ribosomal RNAs and formation of the 60S ribosome. The chain is Ribosome biogenesis protein ERB1 from Phaeosphaeria nodorum (strain SN15 / ATCC MYA-4574 / FGSC 10173) (Glume blotch fungus).